The following is a 559-amino-acid chain: Poly [ADP-ribose] polymerase 2 (559 aa).

A disordered region spans residues 1–58 (MAPRRQRSGSGRRVLNEAKKVDNGNKATEDDSPPGKKMRTCQRKGPMAGGKDADRTKD). Residues 1 to 83 (MAPRRQRSGS…VDPECAAKLG (83 aa)) form an N-terminal region (NTR) region. Basic and acidic residues predominate over residues 14-29 (VLNEAKKVDNGNKATE). 2 consecutive short sequence motifs (nuclear localization signal) follow at residues 19–20 (KK) and 33–39 (PPGKKMR). K36 and K37 each carry N6-(ADP-ribosyl)lysine; alternate. An N6-acetyllysine; alternate mark is found at K36 and K37. A WGR domain is found at 84–181 (KAHVYCEGDD…ENFEKVPGKY (98 aa)). The 118-residue stretch at 207–324 (ESQLDLRVQE…DIEIALKLVK (118 aa)) folds into the PARP alpha-helical domain. S208 is modified (phosphoserine). In terms of domain architecture, PARP catalytic spans 332–559 (HPLDQHYRNL…KIQFNFLQLW (228 aa)). NAD(+) contacts are provided by residues 404 to 406 (HGS), G413, R420, and S446. The For poly [ADP-ribose] polymerase activity role is filled by E534.

Belongs to the ARTD/PARP family. Component of a base excision repair (BER) complex, containing at least XRCC1, PARP1, POLB and LRIG3. Homo- and heterodimer with PARP1. Interacts (via the PARP catalytic domain) with HPF1. Interacts with core nucleosomes. Auto poly-ADP-ribosylated on serine residues, leading to dissociation of the PARP2-HPF1 complex from chromatin. Poly-ADP-ribosylated by PARP1. Post-translationally, acetylation reduces DNA binding and enzymatic activity. In terms of processing, proteolytically cleaved by caspase-8 (CASP8) in response to apoptosis, leading to its inactivation. As to expression, widely expressed; the highest levels were in testis followed by ovary. Expression is correlated with proliferation, with higher levels occurring during early fetal development and organogenesis and in the highly proliferative cell compartments of adult.

The protein resides in the nucleus. The protein localises to the chromosome. The enzyme catalyses NAD(+) + (ADP-D-ribosyl)n-acceptor = nicotinamide + (ADP-D-ribosyl)n+1-acceptor + H(+).. It catalyses the reaction L-seryl-[protein] + NAD(+) = O-(ADP-D-ribosyl)-L-seryl-[protein] + nicotinamide + H(+). It carries out the reaction L-aspartyl-[protein] + NAD(+) = 4-O-(ADP-D-ribosyl)-L-aspartyl-[protein] + nicotinamide. The catalysed reaction is L-glutamyl-[protein] + NAD(+) = 5-O-(ADP-D-ribosyl)-L-glutamyl-[protein] + nicotinamide. ADP-ribosyltransferase activity is regulated via an allosteric activation mechanism. In absence of activation signal, PARP2 is autoinhibited by the PARP alpha-helical domain (also named HD region), which prevents effective NAD(+)-binding. Activity is highly stimulated by signals, which unfold the PARP alpha-helical domain, relieving autoinhibition. Poly-ADP-ribosyltransferase activity is tightly regulated and PARP2 is removed from damaged chromatin following initial poly-ADP-ribosylation of chromatin to avoid prolonged residence (trapping) that has cytotoxic consequences. CHD1L promotes PARP2 removal from chromatin. Poly-ADP-ribosyltransferase that mediates poly-ADP-ribosylation of proteins and plays a key role in DNA repair. Mediates glutamate, aspartate or serine ADP-ribosylation of proteins: the ADP-D-ribosyl group of NAD(+) is transferred to the acceptor carboxyl group of target residues and further ADP-ribosyl groups are transferred to the 2'-position of the terminal adenosine moiety, building up a polymer with an average chain length of 20-30 units. Serine ADP-ribosylation of proteins constitutes the primary form of ADP-ribosylation of proteins in response to DNA damage. Mediates glutamate and aspartate ADP-ribosylation of target proteins in absence of HPF1. Following interaction with HPF1, catalyzes serine ADP-ribosylation of target proteins; HPF1 conferring serine specificity by completing the PARP2 active site. PARP2 initiates the repair of double-strand DNA breaks: recognizes and binds DNA breaks within chromatin and recruits HPF1, licensing serine ADP-ribosylation of target proteins, such as histones, thereby promoting decompaction of chromatin and the recruitment of repair factors leading to the reparation of DNA strand breaks. HPF1 initiates serine ADP-ribosylation but restricts the polymerase activity of PARP2 in order to limit the length of poly-ADP-ribose chains. Specifically mediates formation of branched poly-ADP-ribosylation. Branched poly-ADP-ribose chains are specifically recognized by some factors, such as APLF. In addition to proteins, also able to ADP-ribosylate DNA: preferentially acts on 5'-terminal phosphates at DNA strand breaks termini in nicked duplex. The protein is Poly [ADP-ribose] polymerase 2 (Parp2) of Mus musculus (Mouse).